Reading from the N-terminus, the 458-residue chain is Protein U54 (458 aa).

Residues Asn-76, Asn-102, Asn-281, Asn-321, Asn-346, Asn-434, and Asn-451 are each glycosylated (N-linked (GlcNAc...) asparagine; by host).

Belongs to the herpesviridae UL82 family.

The polypeptide is Protein U54 (U54) (Homo sapiens (Human)).